The following is a 198-amino-acid chain: Recombination protein RecR (198 aa).

The segment at 57 to 72 (CSVCGHITEEDPCYIC) adopts a C4-type zinc-finger fold. In terms of domain architecture, Toprim spans 80-175 (SVICVVEDDK…KVTRLAQGLS (96 aa)).

It belongs to the RecR family.

May play a role in DNA repair. It seems to be involved in an RecBC-independent recombinational process of DNA repair. It may act with RecF and RecO. The protein is Recombination protein RecR of Staphylococcus carnosus (strain TM300).